A 300-amino-acid polypeptide reads, in one-letter code: Putative 1-phosphofructokinase (300 aa).

Residues 214–219 (SDGAQG) and 246–247 (GD) contribute to the ATP site. Aspartate 247 serves as the catalytic Proton acceptor.

It belongs to the carbohydrate kinase PfkB family.

The enzyme catalyses beta-D-fructose 1-phosphate + ATP = beta-D-fructose 1,6-bisphosphate + ADP + H(+). Its function is as follows. Catalyzes the ATP-dependent phosphorylation of fructose-l-phosphate to fructose-l,6-bisphosphate. This Mycoplasma pneumoniae (strain ATCC 29342 / M129 / Subtype 1) (Mycoplasmoides pneumoniae) protein is Putative 1-phosphofructokinase (fruK).